The sequence spans 172 residues: MSVNMDELRHQVMINQFVLTAGCAADQAKQLLQAAHWQFETALSSFFQEANIPSHHQMMCTPRNTPATPPNFPDAITMFSKLRASECPGGGVSAGGGSSAQVSMACSPPHASFWASPPPNQQPVWLPPSSPTGHHTLHHHHHHMHPPPSWPPVSQPANGPQTPVISALHGQR.

The segment covering 118–130 has biased composition (pro residues); that stretch reads PPNQQPVWLPPSS. Residues 118-172 form a disordered region; it reads PPNQQPVWLPPSSPTGHHTLHHHHHHMHPPPSWPPVSQPANGPQTPVISALHGQR. Residues 135-145 show a composition bias toward basic residues; sequence HTLHHHHHHMH.

Belongs to the UBALD family.

This Danio rerio (Zebrafish) protein is UBA-like domain-containing protein 2 (ubald2).